Consider the following 61-residue polypeptide: Small ribosomal subunit protein uS14 (61 aa).

The Zn(2+) site is built by C24, C27, C40, and C43.

Belongs to the universal ribosomal protein uS14 family. Zinc-binding uS14 subfamily. Part of the 30S ribosomal subunit. Contacts proteins S3 and S10. Requires Zn(2+) as cofactor.

In terms of biological role, binds 16S rRNA, required for the assembly of 30S particles and may also be responsible for determining the conformation of the 16S rRNA at the A site. The polypeptide is Small ribosomal subunit protein uS14 (Fervidobacterium nodosum (strain ATCC 35602 / DSM 5306 / Rt17-B1)).